The primary structure comprises 155 residues: Small ribosomal subunit protein uS7cz/uS7cy (155 aa).

The protein belongs to the universal ribosomal protein uS7 family. As to quaternary structure, part of the 30S ribosomal subunit.

It localises to the plastid. It is found in the chloroplast. In terms of biological role, one of the primary rRNA binding proteins, it binds directly to 16S rRNA where it nucleates assembly of the head domain of the 30S subunit. The sequence is that of Small ribosomal subunit protein uS7cz/uS7cy (rps7-A) from Pelargonium hortorum (Common geranium).